A 709-amino-acid polypeptide reads, in one-letter code: Ribosomal RNA large subunit methyltransferase K/L (709 aa).

Residues 43–154 enclose the THUMP domain; sequence LAYRITLWTR…NGVITIAMNF (112 aa).

Belongs to the methyltransferase superfamily. RlmKL family.

The protein localises to the cytoplasm. The enzyme catalyses guanosine(2445) in 23S rRNA + S-adenosyl-L-methionine = N(2)-methylguanosine(2445) in 23S rRNA + S-adenosyl-L-homocysteine + H(+). The catalysed reaction is guanosine(2069) in 23S rRNA + S-adenosyl-L-methionine = N(2)-methylguanosine(2069) in 23S rRNA + S-adenosyl-L-homocysteine + H(+). Functionally, specifically methylates the guanine in position 2445 (m2G2445) and the guanine in position 2069 (m7G2069) of 23S rRNA. This chain is Ribosomal RNA large subunit methyltransferase K/L, found in Shewanella baltica (strain OS195).